We begin with the raw amino-acid sequence, 275 residues long: Large ribosomal subunit protein uL2cz/uL2cy (275 aa).

2 disordered regions span residues 1–26 (MAIHLYKTSTPSTRNGTVDSRQVKSN) and 224–275 (MNPV…RRTK). A compositionally biased stretch (polar residues) spans 7-26 (KTSTPSTRNGTVDSRQVKSN).

It belongs to the universal ribosomal protein uL2 family. As to quaternary structure, part of the 50S ribosomal subunit.

It is found in the plastid. Its subcellular location is the chloroplast. In Phaseolus angularis (Azuki bean), this protein is Large ribosomal subunit protein uL2cz/uL2cy (rpl2-A).